The following is a 1198-amino-acid chain: MPITQIISASDSEAGPKPSISLVPDKPSEPETSPRHHRLSRSLSKFKRWRGRSNSSLSMGSSEQQELQDSPNEARSDDDENGYNNDNADDLAKSKYMMKSIAGLLTTASVYAGMNNAQEMNVLSQVDSEESDSSDSFQENIGQNEVKSKKENLKTKSHPEVPRLDKRKPTLFDFSITREKLSKDNVAKLRQRFCLDEQEPFLNDFPAWLLKDVLVQGHIFITTKHFLFFAYLPKNPRSVKMSGNLNIRTKLIRSTRYWCVLKNHLFSMYTSSTELYFPVLTIDLREVQKIETQKHTLNGSATKTFKLYTDESTFKFNADSEFSAKSWVNALKKEQFAAQNSENNSISLKIPLPNIIEIDDQPIVNKALTLRLRALESSQTYAIDDFMFVFMDGSGSQVKESLGEQLAILQKSGVNTLYYDIPAKKSKSSFGKETPATAEQKNNGEDSKYLNVPTSAVPSSENGKKSRFRFRERSNSWFRRAKPLEDSQVEDVEEIYKDAANDIDSSVHSTIHIHEQEDSQEQTVAWKPSHLKNFAEMWAAKPIHYRNKFIPFQKDDTYLIKETEEVSANERFRYHFKFNKEKSLISTYYTYLNRNVPVYGKIYVSNDTVCFRSLLPGSNTYMVLPLVDVETCYKEKGFRFGYFVLVIVIHGHEELFFEFSTEVARDDIERILLKLLDNIYASSAEGSNISSASLGDVQHNPDSAKLKLFEDKINAEGFEVPLMIDENPHYKTSIKPNKSYKFGLLTIGSRGDVQPYIALGKGLIKEGHQVVIITHSEFRDFVESHGIQFEEIAGNPVELMSLMVENESMNVKMLREASSKFRGWIDALLQTSWEVCNRRKFDILIESPSAMVGIHIAEALQIPYFRAFTMPWTRTRAYPHAFIVPDQKRGGNYNYLTHVLFENVFWKGISGQVNKWRVETLGLGKTNLFLLQQNNVPFLYNVSPTIFPPSIDFSEWVRVTGYWFLDDKSTFKPPAELQEFISEARSKGKKLVYIGFGSIVVSNAKEMTEALVEAVMEADVYCILNKGWSERLGDKAAKKTEVDLPRNILNIGNVPHDWLFPQVDAAVHHGGSGTTGASLRAGLPTVIKPFFGDQFFYAGRVEDIGVGIALKKLNAQTLADALKVATTNKIMKDRAGLIKKKISKEDGIKTAISAIYNELEYARSVTLSRVKTPRKKEENVDATKLTPAETTDEGWTMI.

The span at 1 to 11 (MPITQIISASD) shows a compositional bias: polar residues. 2 disordered regions span residues 1-89 (MPIT…DNAD) and 124-162 (SQVD…PEVP). Positions 35 to 51 (RHHRLSRSLSKFKRWRG) are enriched in basic residues. Residues 52 to 67 (RSNSSLSMGSSEQQEL) show a composition bias toward low complexity. Position 76 is a phosphoserine (S76). The span at 146–162 (VKSKKENLKTKSHPEVP) shows a compositional bias: basic and acidic residues. In terms of domain architecture, GRAM 1 spans 187–236 (AKLRQRFCLDEQEPFLNDFPAWLLKDVLVQGHIFITTKHFLFFAYLPKNP). Positions 238-336 (SVKMSGNLNI…WVNALKKEQF (99 aa)) constitute a PH domain. The tract at residues 427-465 (KSSFGKETPATAEQKNNGEDSKYLNVPTSAVPSSENGKK) is disordered. The segment covering 452–461 (VPTSAVPSSE) has biased composition (polar residues). The GRAM 2 domain maps to 570–636 (ERFRYHFKFN…VDVETCYKEK (67 aa)). S693 carries the post-translational modification Phosphoserine. The UDP-alpha-D-glucose site is built by S749, R750, D752, N1025, N1053, V1054, H1056, H1069, S1072, G1073, T1074, D1093, and Q1094.

Belongs to the glycosyltransferase 28 family.

The protein localises to the cytoplasm. It is found in the membrane. It catalyses the reaction a sterol + UDP-alpha-D-glucose = a sterol 3-beta-D-glucoside + UDP + H(+). It carries out the reaction ergosterol + UDP-alpha-D-glucose = ergosteryl 3-beta-D-glucoside + UDP + H(+). Sterol glycosyltransferase responsible for the glycosylation of ergosterol to form ergosterol-glucoside. Also shows activity in vitro on other sterols such as cholesterol, beta-sitosterol, stigmasterol and tomatidine. In contrasts to what is observed in Pichia pastoris and Aspergillus oryzae, is not involved in cytoplasm to vacuole transport (Cvt), pexophagy or nonselective autophagy in Saccharomyces cerevisiae. The protein is Sterol 3-beta-glucosyltransferase of Saccharomyces cerevisiae (strain YJM789) (Baker's yeast).